A 205-amino-acid polypeptide reads, in one-letter code: Imidazoleglycerol-phosphate dehydratase (205 aa).

The tract at residues 1–27 (MKQASPRAGGAKARRGQVARKTKETDV) is disordered.

The protein belongs to the imidazoleglycerol-phosphate dehydratase family.

It is found in the cytoplasm. The enzyme catalyses D-erythro-1-(imidazol-4-yl)glycerol 3-phosphate = 3-(imidazol-4-yl)-2-oxopropyl phosphate + H2O. The protein operates within amino-acid biosynthesis; L-histidine biosynthesis; L-histidine from 5-phospho-alpha-D-ribose 1-diphosphate: step 6/9. The chain is Imidazoleglycerol-phosphate dehydratase from Anaeromyxobacter sp. (strain Fw109-5).